Consider the following 363-residue polypeptide: Endopolygalacturonase A (363 aa).

The signal sequence occupies residues 1–20 (MQLLQSSVIAATVGAALVAA). Positions 21 to 28 (VPVELEAR) are excised as a propeptide. Cys31 and Cys46 are oxidised to a cystine. 6 PbH1 repeats span residues 158–187 (SDNLNITDVTIDNSAGTAEGHNTDAFDVGS), 188–209 (STYINIDGATVYNQDDCLAINS), 210–230 (GSHITFTNGYCDGGHGLSIGS), 239–260 (VEDVTISNSKVVNSQNGVRIKT), 268–290 (VSNVKFEDITLSGITKYGLIVEQ), and 302–347 (TNGI…SITG). Residue Asn162 is glycosylated (N-linked (GlcNAc...) asparagine). The active-site Proton donor is the Asp202. A disulfide bridge links Cys204 with Cys220. Residue His224 is part of the active site. 2 disulfide bridges follow: Cys330/Cys335 and Cys354/Cys363.

Belongs to the glycosyl hydrolase 28 family.

The protein resides in the secreted. The catalysed reaction is (1,4-alpha-D-galacturonosyl)n+m + H2O = (1,4-alpha-D-galacturonosyl)n + (1,4-alpha-D-galacturonosyl)m.. Involved in maceration and soft-rotting of plant tissue. Hydrolyzes the 1,4-alpha glycosidic bonds of de-esterified pectate in the smooth region of the plant cell wall. This Aspergillus flavus (strain ATCC MYA-384 / AF70) protein is Endopolygalacturonase A (pgaA).